Reading from the N-terminus, the 507-residue chain is 2,3-bisphosphoglycerate-independent phosphoglycerate mutase (507 aa).

2 residues coordinate Mn(2+): Asp13 and Ser63. Catalysis depends on Ser63, which acts as the Phosphoserine intermediate. Residues His124, 153–154 (RD), Arg183, Arg189, 254–257 (RADR), and Lys330 each bind substrate. 5 residues coordinate Mn(2+): Asp396, His400, Asp437, His438, and His456.

This sequence belongs to the BPG-independent phosphoglycerate mutase family. As to quaternary structure, monomer. It depends on Mn(2+) as a cofactor.

It catalyses the reaction (2R)-2-phosphoglycerate = (2R)-3-phosphoglycerate. It participates in carbohydrate degradation; glycolysis; pyruvate from D-glyceraldehyde 3-phosphate: step 3/5. Functionally, catalyzes the interconversion of 2-phosphoglycerate and 3-phosphoglycerate. The sequence is that of 2,3-bisphosphoglycerate-independent phosphoglycerate mutase from Paracoccus denitrificans (strain Pd 1222).